The chain runs to 422 residues: Vitamin D3 receptor (422 aa).

A DNA-binding region (nuclear receptor) is located at residues 22-90; the sequence is PRICGVCGDK…RLKRCVDIGM (69 aa). Residues Cys-25, Cys-28, Cys-42, Cys-45, Cys-61, Cys-67, Cys-77, and Cys-80 each coordinate Zn(2+). NR C4-type zinc fingers lie at residues 25–45 and 61–85; these read CGVCGDKATGFHFNAMTCEGC and CPFNGDCRITKDNRRHCQSCRLKRC. The tract at residues 98–127 is hinge; it reads DEEVQRKRQMINKRKSEEALKESMRPKISD. Positions 128–418 constitute an NR LBD domain; that stretch reads EQQKMIDILL…LTPLMLEVFS (291 aa). A disordered region spans residues 170 to 191; that stretch reads RSSSVHTQGSPSEDSDVFTSSP. Ser-232 is a binding site for calcitriol. Residues 241–259 form an interaction with coactivator LXXLL motif region; that stretch reads KMIPGFRDLIAEDQIALLK. Arg-269, Ser-273, His-300, and His-392 together coordinate calcitriol. Positions 411–419 match the 9aaTAD motif; it reads PLMLEVFSD.

It belongs to the nuclear hormone receptor family. NR1 subfamily. In terms of assembly, homodimer in the absence of bound vitamin D3. Heterodimer with RXRA after vitamin D3 binding. In terms of tissue distribution, detected in all tissues examined. Highest level in small intestine and skin.

The protein localises to the nucleus. The protein resides in the cytoplasm. In terms of biological role, nuclear receptor for calcitriol, the active form of vitamin D3 which mediates the action of this vitamin on cells. Enters the nucleus upon vitamin D3 binding where it forms heterodimers with the retinoid X receptor/RXR. The VDR-RXR heterodimers bind to specific response elements on DNA and activate the transcription of vitamin D3-responsive target genes. Plays a central role in calcium homeostasis. Also functions as a receptor for the secondary bile acid lithocholic acid (LCA) and its metabolites. The chain is Vitamin D3 receptor (vdr) from Xenopus laevis (African clawed frog).